The chain runs to 264 residues: uncharacterized protein (264 aa).

8 helical membrane passes run 19 to 39 (LFPA…LPFL), 42 to 62 (YDWL…SGLE), 69 to 89 (VITL…HMGS), 100 to 120 (IFGV…YLCQ), 136 to 156 (FAVV…HFSI), 160 to 180 (WWLS…YEVN), 192 to 212 (FILI…FGAW), and 223 to 243 (LVHL…FLIV).

The protein resides in the cell membrane. This is an uncharacterized protein from Bacillus subtilis (strain 168).